Reading from the N-terminus, the 137-residue chain is MAEALYYGGRQRQEQPRSTQLVKATTAVVAGGSLLILAGLVLAGTVIGLTTITPLFVIFSPVLVPAVITVALLGLGFLASGGFGVAAITVLTWIYRYVTGKHPPGANQLDTARHKLMGKAREIKDFGQQQTSGAQAS.

N-acetylalanine; alternate is present on Ala-2. 2 helical membrane passes run 27–47 (AVVAGGSLLILAGLVLAGTVI) and 55–75 (LFVIFSPVLVPAVITVALLGL).

Belongs to the oleosin family. In terms of tissue distribution, expressed in seeds (at protein level).

It localises to the lipid droplet. The protein localises to the membrane. May have a structural role to stabilize the lipid body during desiccation of the seed by preventing coalescence of the oil. Probably interacts with both lipid and phospholipid moieties of lipid bodies. May also provide recognition signals for specific lipase anchorage in lipolysis during seedling growth. This Arachis hypogaea (Peanut) protein is Oleosin Ara h 11.0101.